Reading from the N-terminus, the 173-residue chain is NADH-ubiquinone oxidoreductase chain 6 (173 aa).

6 helical membrane passes run 1–21, 27–47, 48–68, 87–107, 113–133, and 139–159; these read MTYF…AVAS, YGVV…LSLG, VSFV…VVFV, VVGY…VGGF, FGVV…FSGV, and CGVG…FVVL.

The protein belongs to the complex I subunit 6 family.

Its subcellular location is the mitochondrion membrane. It carries out the reaction a ubiquinone + NADH + 5 H(+)(in) = a ubiquinol + NAD(+) + 4 H(+)(out). Core subunit of the mitochondrial membrane respiratory chain NADH dehydrogenase (Complex I) that is believed to belong to the minimal assembly required for catalysis. Complex I functions in the transfer of electrons from NADH to the respiratory chain. The immediate electron acceptor for the enzyme is believed to be ubiquinone. The protein is NADH-ubiquinone oxidoreductase chain 6 (MT-ND6) of Cepphus grylle (Black guillemot).